The chain runs to 562 residues: 3-(3-hydroxy-phenyl)propionate/3-hydroxycinnamic acid hydroxylase (562 aa).

Residues 8–37 and 275–285 each bind FAD; these read DVVI…IIEE and FRKGRMLLAGD.

Belongs to the PheA/TfdB FAD monooxygenase family. The cofactor is FAD.

The catalysed reaction is 3-(3-hydroxyphenyl)propanoate + NADH + O2 + H(+) = 3-(2,3-dihydroxyphenyl)propanoate + NAD(+) + H2O. It carries out the reaction (2E)-3-(3-hydroxyphenyl)prop-2-enoate + NADH + O2 + H(+) = (2E)-3-(2,3-dihydroxyphenyl)prop-2-enoate + NAD(+) + H2O. It functions in the pathway aromatic compound metabolism; 3-phenylpropanoate degradation. Catalyzes the insertion of one atom of molecular oxygen into position 2 of the phenyl ring of 3-(3-hydroxyphenyl)propionate (3-HPP) and hydroxycinnamic acid (3HCI). The chain is 3-(3-hydroxy-phenyl)propionate/3-hydroxycinnamic acid hydroxylase from Mycolicibacterium smegmatis (strain ATCC 700084 / mc(2)155) (Mycobacterium smegmatis).